The primary structure comprises 321 residues: LIMR family protein SELMODRAFT_432210 (321 aa).

5 consecutive transmembrane segments (helical) span residues Lys-28–Phe-48, Cys-116–Trp-133, Leu-139–Val-159, Leu-240–Phe-260, and Leu-284–Gly-304.

Belongs to the LIMR family.

Its subcellular location is the membrane. This Selaginella moellendorffii (Spikemoss) protein is LIMR family protein SELMODRAFT_432210.